A 320-amino-acid chain; its full sequence is NAC domain-containing protein 20 (320 aa).

One can recognise an NAC domain in the interval 14 to 170 (LPPGFRFHPT…DWAVCRIFHK (157 aa)). Residues 114 to 176 (IGMKKTLVFY…IFHKSSGIKK (63 aa)) mediate DNA binding.

Forms homodimers. Forms heterodimers with NAC26. As to expression, expressed in developing seeds. Expressed in developing endosperm.

The protein resides in the nucleus. Its subcellular location is the endoplasmic reticulum. Its function is as follows. Transcription factor that acts redundantly with NAC26 to regulate the expression of genes involved in the biosynthesis of starch and storage proteins in grain. Directly binds to the promoters of starch synthase 1 (SS1), pullulanase (PUL), glutelin A1 (GLUA1), glutelins B4 and B5 (GLUB4 and GLUB5), alpha-globulin and 16 kDa prolamin, and activates their expression. In Oryza sativa subsp. japonica (Rice), this protein is NAC domain-containing protein 20.